A 1353-amino-acid polypeptide reads, in one-letter code: Protein prickle (1353 aa).

Disordered regions lie at residues 130 to 206 (VDDG…TKRN), 266 to 292 (QEEE…PPLP), and 500 to 540 (AKYS…SAHA). Low complexity predominate over residues 147-165 (TPTATATAGRPLFPLSSSP). Residues 166 to 178 (RRSKKLLRSLRAH) are compositionally biased toward basic residues. Over residues 179-189 (VKGESRPEKPA) the composition is skewed to basic and acidic residues. Residues 514-532 (LSPALSTPSPPSLLHHPAA) show a composition bias toward low complexity. In terms of domain architecture, PET spans 548–656 (MDMQRQSHSD…NVRQLMSARP (109 aa)). 3 consecutive LIM zinc-binding domains span residues 655–719 (RPCD…ETLK), 720–780 (PRCS…MFAE), and 781–843 (YCDY…GEPP). Disordered stretches follow at residues 840 to 892 (GEPP…HQAS), 933 to 962 (HCRS…NMSP), and 1062 to 1303 (ADIM…SSSS). The span at 861-892 (TQRVRPQTRITSSHASSSPPMSPQQQQQHQAS) shows a compositional bias: low complexity. 2 stretches are compositionally biased toward polar residues: residues 952-962 (RASSTSHNMSP) and 1111-1120 (SLNTPLSAHS). Residues 1130–1142 (SILSGASSSSPMS) show a composition bias toward low complexity. Residues 1177-1205 (GDKDRDRDRERDRDRDRDKGGDKDRESGR) are compositionally biased toward basic and acidic residues. Composition is skewed to basic residues over residues 1207 to 1220 (GPGH…RRKS) and 1228 to 1240 (NHHR…RSHS). Basic and acidic residues predominate over residues 1269-1284 (ETAHKSPRQQRERERE).

The protein belongs to the prickle / espinas / testin family. As to quaternary structure, interacts with dsh; PET and LIM domains interact with dsh DEP domain, in wing cells. Interacts with Vang in photoreceptor cells.

It localises to the cell membrane. Its function is as follows. Acts in a planar cell polarity (PCP) complex; polarization along the apical/basal axis of epithelial cells. PCP signaling in the wing disk requires the receptor fz and the cytoplasmic proteins dsh and pk. These act in a feedback loop leading to activation of the jnk cascade and subsequent polarized arrangement of hairs and bristles. Dgo and pk compete with one another for dsh binding, thereby modulating fz dsh activity and ensuring tight control over fz PCP signaling. Vang, stan and pk function together to regulate the establishment of tissue polarity in the adult eye. In Drosophila pseudoobscura pseudoobscura (Fruit fly), this protein is Protein prickle.